Here is a 136-residue protein sequence, read N- to C-terminus: Galectin-7 (136 aa).

The Galectin domain occupies 6–136 (HKSSLPEGIR…DVQLDSVRIF (131 aa)). 70–76 (WGREERG) contacts a beta-D-galactoside.

In terms of assembly, monomer. In terms of tissue distribution, mainly expressed in stratified squamous epithelium.

It localises to the cytoplasm. Its subcellular location is the nucleus. The protein localises to the secreted. In terms of biological role, could be involved in cell-cell and/or cell-matrix interactions necessary for normal growth control. Pro-apoptotic protein that functions intracellularly upstream of JNK activation and cytochrome c release. The polypeptide is Galectin-7 (LGALS7) (Homo sapiens (Human)).